The primary structure comprises 550 residues: Urocanate hydratase (550 aa).

NAD(+) is bound by residues 48-49 (GG), Q126, 172-174 (GMG), E192, R197, 238-239 (NA), 259-263 (QTSAH), 268-269 (YL), and Y317. C405 is an active-site residue. G487 is an NAD(+) binding site.

Belongs to the urocanase family. NAD(+) serves as cofactor.

The protein resides in the cytoplasm. It carries out the reaction 4-imidazolone-5-propanoate = trans-urocanate + H2O. It participates in amino-acid degradation; L-histidine degradation into L-glutamate; N-formimidoyl-L-glutamate from L-histidine: step 2/3. Its function is as follows. Catalyzes the conversion of urocanate to 4-imidazolone-5-propionate. The sequence is that of Urocanate hydratase from Saccharopolyspora erythraea (strain ATCC 11635 / DSM 40517 / JCM 4748 / NBRC 13426 / NCIMB 8594 / NRRL 2338).